An 801-amino-acid chain; its full sequence is PR domain zinc finger protein 4 (801 aa).

An SET domain is found at 412-529 (KQLVLRQSIV…PENELLFYYS (118 aa)). The C2H2-type 1; atypical zinc-finger motif lies at 545–566 (HLCNCGKECNSYTEFKAHLTSH). C2H2-type zinc fingers lie at residues 618 to 640 (HKCDFCSKAFSDPSNLRTHLKIH), 646 to 668 (YRCTLCDKSFTQKAHLESHMVIH), 674 to 696 (LKCDYCDKLFMRRQDLKQHVLIH), and 702 to 724 (IKCPKCDKLFLRTNHLKKHLNSH). A C2H2-type 6; atypical zinc finger spans residues 730-752 (YVCEKCTKAYLTKYHLTRHLKTC). The tract at residues 751-782 (TCKGPTSSSSAPEEEEEDDSEEEDLADSVGTE) is disordered. A compositionally biased stretch (acidic residues) spans 762 to 776 (PEEEEEDDSEEEDLA).

It belongs to the class V-like SAM-binding methyltransferase superfamily.

The protein resides in the nucleus. Functionally, may function as a transcription factor involved in cell differentiation. This Pongo abelii (Sumatran orangutan) protein is PR domain zinc finger protein 4 (PRDM4).